Here is a 396-residue protein sequence, read N- to C-terminus: Phosphoglycerate kinase (396 aa).

Substrate contacts are provided by residues 23–25 (DFN), Arg-38, 61–64 (HMGK), Arg-122, and Arg-155. ATP-binding positions include Lys-206, Gly-296, Glu-327, and 353 to 356 (GGDS).

It belongs to the phosphoglycerate kinase family. As to quaternary structure, monomer.

It is found in the cytoplasm. The catalysed reaction is (2R)-3-phosphoglycerate + ATP = (2R)-3-phospho-glyceroyl phosphate + ADP. The protein operates within carbohydrate degradation; glycolysis; pyruvate from D-glyceraldehyde 3-phosphate: step 2/5. In Clostridium botulinum (strain Alaska E43 / Type E3), this protein is Phosphoglycerate kinase.